Here is a 243-residue protein sequence, read N- to C-terminus: Complement C1q tumor necrosis factor-related protein 5 (243 aa).

The first 15 residues, 1–15, serve as a signal peptide directing secretion; sequence MRPLLALLLLGLASG. The tract at residues 15–124 is disordered; that stretch reads GSPPLDDNKI…VPPPADTPLP (110 aa). One can recognise a Collagen-like domain in the interval 30–95; the sequence is GQPGLPGTPG…AGPVGAIGPA (66 aa). The region spanning 99 to 238 is the C1q domain; that stretch reads SVPPRSAFSA…GFLVYSDWHS (140 aa).

As to quaternary structure, homotrimer (via collagen-like domain). May form higher order oligomers by supercoiling of the trimers. May interact with ERFE.

The protein resides in the secreted. This is Complement C1q tumor necrosis factor-related protein 5 (C1qtnf5) from Rattus norvegicus (Rat).